Consider the following 101-residue polypeptide: NADH-quinone oxidoreductase subunit K (101 aa).

3 consecutive transmembrane segments (helical) span residues 4-24, 30-50, and 61-81; these read LSHY…GIFL, IVLL…FIAF, and VFVF…LAIL.

The protein belongs to the complex I subunit 4L family. NDH-1 is composed of 14 different subunits. Subunits NuoA, H, J, K, L, M, N constitute the membrane sector of the complex.

The protein localises to the cell inner membrane. It carries out the reaction a quinone + NADH + 5 H(+)(in) = a quinol + NAD(+) + 4 H(+)(out). Functionally, NDH-1 shuttles electrons from NADH, via FMN and iron-sulfur (Fe-S) centers, to quinones in the respiratory chain. The immediate electron acceptor for the enzyme in this species is believed to be ubiquinone. Couples the redox reaction to proton translocation (for every two electrons transferred, four hydrogen ions are translocated across the cytoplasmic membrane), and thus conserves the redox energy in a proton gradient. The protein is NADH-quinone oxidoreductase subunit K of Azoarcus sp. (strain BH72).